Reading from the N-terminus, the 198-residue chain is Protein ORFi in retron Ec67 (198 aa).

This sequence belongs to the CI repressor protein family.

This chain is Protein ORFi in retron Ec67, found in Escherichia coli.